The primary structure comprises 238 residues: 7-cyano-7-deazaguanine synthase (238 aa).

14–24 lines the ATP pocket; it reads FSGGQDSATCL. Zn(2+) contacts are provided by C202, C217, C220, and C223.

Belongs to the QueC family. It depends on Zn(2+) as a cofactor.

The catalysed reaction is 7-carboxy-7-deazaguanine + NH4(+) + ATP = 7-cyano-7-deazaguanine + ADP + phosphate + H2O + H(+). It functions in the pathway purine metabolism; 7-cyano-7-deazaguanine biosynthesis. Functionally, catalyzes the ATP-dependent conversion of 7-carboxy-7-deazaguanine (CDG) to 7-cyano-7-deazaguanine (preQ(0)). The sequence is that of 7-cyano-7-deazaguanine synthase from Nitrobacter hamburgensis (strain DSM 10229 / NCIMB 13809 / X14).